The chain runs to 406 residues: Tyrosine--tRNA ligase (406 aa).

Residue tyrosine 35 coordinates L-tyrosine. A 'HIGH' region motif is present at residues 40 to 49 (ATSTSLHIGH). Positions 166 and 170 each coordinate L-tyrosine. Residues 226-230 (KMGKS) carry the 'KMSKS' region motif. Lysine 229 provides a ligand contact to ATP. The region spanning 341-405 (ILLVDLMVSS…IGKKKILRII (65 aa)) is the S4 RNA-binding domain.

Belongs to the class-I aminoacyl-tRNA synthetase family. TyrS type 1 subfamily. In terms of assembly, homodimer.

Its subcellular location is the cytoplasm. The catalysed reaction is tRNA(Tyr) + L-tyrosine + ATP = L-tyrosyl-tRNA(Tyr) + AMP + diphosphate + H(+). Functionally, catalyzes the attachment of tyrosine to tRNA(Tyr) in a two-step reaction: tyrosine is first activated by ATP to form Tyr-AMP and then transferred to the acceptor end of tRNA(Tyr). The protein is Tyrosine--tRNA ligase of Borrelia hermsii (strain HS1 / DAH).